Reading from the N-terminus, the 61-residue chain is Small ribosomal subunit protein uS14B (61 aa).

The Zn(2+) site is built by Cys24, Cys27, Cys40, and Cys43.

This sequence belongs to the universal ribosomal protein uS14 family. Zinc-binding uS14 subfamily. As to quaternary structure, part of the 30S ribosomal subunit. Contacts proteins S3 and S10. The cofactor is Zn(2+).

Its function is as follows. Binds 16S rRNA, required for the assembly of 30S particles and may also be responsible for determining the conformation of the 16S rRNA at the A site. In Mycolicibacterium gilvum (strain PYR-GCK) (Mycobacterium gilvum (strain PYR-GCK)), this protein is Small ribosomal subunit protein uS14B.